The chain runs to 110 residues: UPF0060 membrane protein Pfl01_4105 (110 aa).

The next 4 helical transmembrane spans lie at 5 to 25, 28 to 48, 59 to 79, and 84 to 104; these read LWFF…WMWL, GKSA…ALLL, AYAA…AVVE, and LGSD…ILFG.

It belongs to the UPF0060 family.

It localises to the cell inner membrane. In Pseudomonas fluorescens (strain Pf0-1), this protein is UPF0060 membrane protein Pfl01_4105.